The primary structure comprises 126 residues: CD59 glycoprotein (126 aa).

The signal sequence occupies residues 1–22 (MRARRGFILLLLLAVLCSTGVS). Residues 23-110 (LRCYNCLDPV…NGAISLLGKT (88 aa)) enclose the UPAR/Ly6 domain. 5 disulfide bridges follow: cysteine 25-cysteine 48, cysteine 28-cysteine 35, cysteine 41-cysteine 61, cysteine 67-cysteine 85, and cysteine 86-cysteine 91. Asparagine 38 carries an N-linked (GlcNAc...) asparagine glycan. The GPI-anchor amidated asparagine moiety is linked to residue asparagine 101. Positions 102-126 (GAISLLGKTALLVTSVLAAILKPCF) are cleaved as a propeptide — removed in mature form.

In terms of assembly, interacts with T-cell surface antigen CD2. In terms of processing, N- and O-glycosylated.

The protein resides in the cell membrane. It is found in the secreted. Functionally, potent inhibitor of the complement membrane attack complex (MAC) action, which protects self-cells from damage during complement activation. Acts by binding to the beta-haipins of C8 (C8A and C8B) components of the assembling MAC, forming an intermolecular beta-sheet that prevents incorporation of the multiple copies of C9 required for complete formation of the osmolytic pore. This chain is CD59 glycoprotein, found in Rattus norvegicus (Rat).